A 393-amino-acid polypeptide reads, in one-letter code: Methylthioribose kinase (393 aa).

ATP-binding positions include Asn38, Lys53, and 107–109 (EDL). A substrate-binding site is contributed by Asp225. 242 to 244 (DPE) provides a ligand contact to ATP. Arg332 is a binding site for substrate.

Belongs to the methylthioribose kinase family. As to quaternary structure, homodimer.

It carries out the reaction 5-(methylsulfanyl)-D-ribose + ATP = 5-(methylsulfanyl)-alpha-D-ribose 1-phosphate + ADP + H(+). The protein operates within amino-acid biosynthesis; L-methionine biosynthesis via salvage pathway; S-methyl-5-thio-alpha-D-ribose 1-phosphate from S-methyl-5'-thioadenosine (hydrolase route): step 2/2. In terms of biological role, catalyzes the phosphorylation of methylthioribose into methylthioribose-1-phosphate. This Bacillus cereus (strain AH820) protein is Methylthioribose kinase.